Reading from the N-terminus, the 111-residue chain is Putative carnobacteriocin-B2 immunity protein (111 aa).

Its function is as follows. Could impart immunity to carnobacteriocin-B2 to naturally sensitive host strains. The sequence is that of Putative carnobacteriocin-B2 immunity protein from Carnobacterium maltaromaticum (Carnobacterium piscicola).